Reading from the N-terminus, the 961-residue chain is Phosphofurin acidic cluster sorting protein 1 (961 aa).

Residues 1-19 (MAERGGAGGGPGGSGGGSS) show a composition bias toward gly residues. Disordered stretches follow at residues 1-70 (MAER…SSST) and 76-95 (VAVA…RTPA). A2 bears the N-acetylalanine mark. Residues 20-34 (QRGSGVAQSPQQQPQ) show a composition bias toward low complexity. A Phosphoserine modification is found at S28. Positions 35-46 (QQPPQPQQPTPP) are enriched in pro residues. A Phosphothreonine modification is found at T44. Residues 51–70 (ATSSSSSTSAAAASSSSSST) are compositionally biased toward low complexity. Phosphotyrosine is present on Y249. The span at 260 to 271 (GIKSKLSDRSPD) shows a compositional bias: basic and acidic residues. Disordered stretches follow at residues 260-297 (GIKS…LHGQ) and 375-426 (NPSD…GKDT). Residues 274 to 291 (NYSEEEEESFSSEQEGSD) show a composition bias toward acidic residues. Positions 351-375 (HVSREQIREVEEDLDELYDSLEMYN) form a coiled coil. Residues S377 and S379 each carry the phosphoserine modification. The segment covering 404–426 (MSQSSSQTEIGSLNSKGSLGKDT) has biased composition (polar residues). Phosphoserine occurs at positions 428 and 493. Disordered stretches follow at residues 475–540 (EKVK…HSTQ) and 758–802 (SPST…SMSS). Position 502 is a phosphothreonine (T502). S517, S526, S527, S529, and S532 each carry phosphoserine. The span at 768-802 (SPVVSLTVPSTSPPSSSGLSRDATATPPSSPSMSS) shows a compositional bias: low complexity.

This sequence belongs to the PACS family. Associates with AP-1 and AP-3 but not with AP-2 complexes. Interacts with FURIN. Forms a ternary complex with FURIN and AP-1. Interacts with PKD2 (via acidic region). Interacts with SORL1. Interacts with WDR37.

The protein resides in the golgi apparatus. It localises to the trans-Golgi network. Coat protein that is involved in the localization of trans-Golgi network (TGN) membrane proteins that contain acidic cluster sorting motifs. Controls the endosome-to-Golgi trafficking of furin and mannose-6-phosphate receptor by connecting the acidic-cluster-containing cytoplasmic domain of these molecules with the adapter-protein complex-1 (AP-1) of endosomal clathrin-coated membrane pits. Required for normal ER Ca2+ handling in lymphocytes. Together with WDR37, it plays an essential role in lymphocyte development, quiescence and survival. Required for stabilizing peripheral lymphocyte populations. The polypeptide is Phosphofurin acidic cluster sorting protein 1 (Pacs1) (Mus musculus (Mouse)).